A 340-amino-acid polypeptide reads, in one-letter code: Erythroferrone (340 aa).

The first 24 residues, 1-24, serve as a signal peptide directing secretion; that stretch reads MASTRRPVGARTLLACASLLAAMG. Disordered stretches follow at residues 30 to 63, 79 to 112, and 141 to 161; these read SAEP…IAHA, SDKG…GPPG, and HCTR…PAAQ. The span at 40–58 shows a compositional bias: pro residues; sequence PQPPGAELPAPPANSPPEP. The span at 84–95 shows a compositional bias: basic residues; the sequence is NSKRRSKARRLK. Hydroxyproline is present on residues P99, P101, P102, P104, P105, and P107. Residues 99-112 are compositionally biased toward pro residues; it reads PGPPGPPGPQGPPG. Polar residues predominate over residues 145–154; that stretch reads DLTTPASGSP. The region spanning 185–340 is the C1q domain; sequence APRVEAAFHC…SHFSAILLGL (156 aa). Residues N229, N281, N292, and N319 are each glycosylated (N-linked (GlcNAc...) asparagine).

It belongs to the adipolin/erythroferrone family. In terms of assembly, homodimer; disulfide-linked. Forms trimer, hexamers and higher molecular weight oligomers. May form heteromeric complexes with C1QTNF2 and C1QTNF12 and, to a lesser extent, with C1QTNF5 and C1QTNF10. Interacts with BMP5 and BMP7; the interaction inhibits BMP-induced transcription of HAMP. Interacts with BMP6; the interaction inhibits BMP-induced transcription of HAMP. Interacts with BMP2. Interacts with heterodimers composed of BMP2 and BMP6 in vitro, the interaction inhibits the heterodimer binding to its receptor BMPR1A /ALK3 and thereby suppresses expression of HAMP. Post-translationally, N-glycosylated; required for secretion of the mature protein. In terms of tissue distribution, expressed in the soleus muscle in the leg (at protein level). Found in blood (at protein level). Weakly expressed in the heart (at protein level). Predominantly expressed in skeletal muscle and, at much lower levels, in other tissues, including lung, eye, smooth muscle, brain and kidney. Within skeletal muscles, higher expression levels in soleus as compared with plantaris. Expressed in osteoblasts, mature osteoclasts and erythroblasts. When fasting, females tend to have higher circulating levels than males. Obese mice tend to have lower expression and circulating levels as compared to lean animals. Following EPO treatment, only expressed in bone marrow and spleen.

The protein resides in the secreted. Its function is as follows. Iron-regulatory hormone that acts as an erythroid regulator after hemorrhage: produced by erythroblasts following blood loss and mediates suppression of hepcidin (HAMP) expression in the liver, thereby promoting increased iron absorption and mobilization from stores. Promotes lipid uptake into adipocytes and hepatocytes via transcriptional up-regulation of genes involved in fatty acid uptake. Inhibits apoptosis and inflammatory response in cardiomyocytes via promotion of sphingosine-1-phosphate (S1P) and cAMP-dependent activation of AKT signaling. Inhibits autophagy induced by nutrient deficiency in hepatocytes via promoting the phosphorylation of IRS1, AKT, and MTOR, and thereby subsequent activation of the AKT-MTOR signaling pathway. Negatively regulates the differentiation of osteoblasts, potentially via sequestering BMP2, and thereby inhibits the activation of SMAD signaling. The reduction in BMP2 signaling in osteoblasts also results in an increase in expression of the osteoclastogenesis-promoting factors TNFSF11/RANKL and SOST, thereby indirectly promotes bone resorption. In Mus musculus (Mouse), this protein is Erythroferrone.